A 360-amino-acid polypeptide reads, in one-letter code: Fe(3+) ions import ATP-binding protein FbpC (360 aa).

Positions 4-236 (LEIKGLHKHY…PKDRMIAEFL (233 aa)) constitute an ABC transporter domain. 36–43 (GPSGCGKT) provides a ligand contact to ATP.

It belongs to the ABC transporter superfamily. Fe(3+) ion importer (TC 3.A.1.10) family. As to quaternary structure, the complex is composed of two ATP-binding proteins (FbpC), two transmembrane proteins (FbpB) and a solute-binding protein (FbpA).

The protein localises to the cell inner membrane. The enzyme catalyses Fe(3+)(out) + ATP + H2O = Fe(3+)(in) + ADP + phosphate + H(+). Functionally, part of the ABC transporter complex FbpABC involved in Fe(3+) ions import. Responsible for energy coupling to the transport system. This Mesorhizobium japonicum (strain LMG 29417 / CECT 9101 / MAFF 303099) (Mesorhizobium loti (strain MAFF 303099)) protein is Fe(3+) ions import ATP-binding protein FbpC.